A 535-amino-acid polypeptide reads, in one-letter code: uncharacterized protein (535 aa).

WD repeat units follow at residues arginine 189 to leucine 226, glutamate 228 to serine 267, histidine 269 to valine 314, alanine 320 to tyrosine 359, glutamine 362 to glutamate 404, and valine 462 to asparagine 505.

The protein belongs to the WD repeat CDC20/Fizzy family.

This is an uncharacterized protein from Schizosaccharomyces pombe (strain 972 / ATCC 24843) (Fission yeast).